Here is a 396-residue protein sequence, read N- to C-terminus: L-lactate dehydrogenase (396 aa).

Positions 1-380 (MIISAASDYR…SGDSLVQELG (380 aa)) constitute an FMN hydroxy acid dehydrogenase domain. Substrate is bound at residue Tyr24. FMN-binding residues include Ser106 and Gln127. Tyr129 is a substrate binding site. Position 155 (Thr155) interacts with FMN. Residue Arg164 coordinates substrate. Residue Lys251 coordinates FMN. The active-site Proton acceptor is His275. Position 278 (Arg278) interacts with substrate. FMN is bound at residue 306 to 330 (DSGIRNGLDVVRMIALGADTVLLGR).

This sequence belongs to the FMN-dependent alpha-hydroxy acid dehydrogenase family. It depends on FMN as a cofactor.

The protein localises to the cell inner membrane. The catalysed reaction is (S)-lactate + A = pyruvate + AH2. Functionally, catalyzes the conversion of L-lactate to pyruvate. Is coupled to the respiratory chain. The chain is L-lactate dehydrogenase from Salmonella choleraesuis (strain SC-B67).